The chain runs to 158 residues: Protein OPG060 (158 aa).

Belongs to the orthopoxvirus OPG058 family.

This chain is Protein OPG060 (OPG060), found in Homo sapiens (Human).